Consider the following 662-residue polypeptide: Protein transport Sec1b (662 aa).

It belongs to the STXBP/unc-18/SEC1 family.

In terms of biological role, involved in the vesicle trafficking. Binds syntaxins. The chain is Protein transport Sec1b (SEC1B) from Arabidopsis thaliana (Mouse-ear cress).